The sequence spans 479 residues: Ribulose bisphosphate carboxylase large chain (479 aa).

The propeptide occupies 1–2 (MS). Substrate contacts are provided by Asn123 and Thr173. Lys175 acts as the Proton acceptor in catalysis. Lys177 is a binding site for substrate. Lys201, Asp203, and Glu204 together coordinate Mg(2+). The residue at position 201 (Lys201) is an N6-carboxylysine. Ser208 bears the Phosphoserine mark. The active-site Proton acceptor is the His294. The substrate site is built by Arg295 and His327. A Phosphothreonine modification is found at Thr330. Ser379 is a binding site for substrate.

This sequence belongs to the RuBisCO large chain family. Type I subfamily. As to quaternary structure, heterohexadecamer of 8 large chains and 8 small chains; disulfide-linked. The disulfide link is formed within the large subunit homodimers. It depends on Mg(2+) as a cofactor. In terms of processing, the disulfide bond which can form in the large chain dimeric partners within the hexadecamer appears to be associated with oxidative stress and protein turnover.

It is found in the plastid. The protein localises to the chloroplast. The enzyme catalyses 2 (2R)-3-phosphoglycerate + 2 H(+) = D-ribulose 1,5-bisphosphate + CO2 + H2O. The catalysed reaction is D-ribulose 1,5-bisphosphate + O2 = 2-phosphoglycolate + (2R)-3-phosphoglycerate + 2 H(+). In terms of biological role, ruBisCO catalyzes two reactions: the carboxylation of D-ribulose 1,5-bisphosphate, the primary event in carbon dioxide fixation, as well as the oxidative fragmentation of the pentose substrate in the photorespiration process. Both reactions occur simultaneously and in competition at the same active site. This Olimarabidopsis pumila (Dwarf rocket) protein is Ribulose bisphosphate carboxylase large chain.